The primary structure comprises 150 residues: 3-hydroxyacyl-[acyl-carrier-protein] dehydratase FabZ (150 aa).

The active site involves histidine 51.

Belongs to the thioester dehydratase family. FabZ subfamily.

Its subcellular location is the cytoplasm. It carries out the reaction a (3R)-hydroxyacyl-[ACP] = a (2E)-enoyl-[ACP] + H2O. Involved in unsaturated fatty acids biosynthesis. Catalyzes the dehydration of short chain beta-hydroxyacyl-ACPs and long chain saturated and unsaturated beta-hydroxyacyl-ACPs. In Geobacter sulfurreducens (strain ATCC 51573 / DSM 12127 / PCA), this protein is 3-hydroxyacyl-[acyl-carrier-protein] dehydratase FabZ.